The chain runs to 220 residues: Small ribosomal subunit protein eS8 (220 aa).

Disordered stretches follow at residues 1–41 (MGIS…LSSN) and 131–151 (AKKD…KKSN). Residues 8 to 26 (MHKRRATGGKQKAWRKKRK) are compositionally biased toward basic residues.

This sequence belongs to the eukaryotic ribosomal protein eS8 family.

This chain is Small ribosomal subunit protein eS8 (RPS8), found in Oryza sativa subsp. japonica (Rice).